The primary structure comprises 62 residues: UPF0434 protein RL4569 (62 aa).

The protein belongs to the UPF0434 family.

This chain is UPF0434 protein RL4569, found in Rhizobium johnstonii (strain DSM 114642 / LMG 32736 / 3841) (Rhizobium leguminosarum bv. viciae).